The primary structure comprises 211 residues: FMN-dependent NADH:quinone oxidoreductase 2 (211 aa).

17 to 19 lines the FMN pocket; the sequence is SYS.

Belongs to the azoreductase type 1 family. Homodimer. FMN is required as a cofactor.

The enzyme catalyses 2 a quinone + NADH + H(+) = 2 a 1,4-benzosemiquinone + NAD(+). It carries out the reaction N,N-dimethyl-1,4-phenylenediamine + anthranilate + 2 NAD(+) = 2-(4-dimethylaminophenyl)diazenylbenzoate + 2 NADH + 2 H(+). Its function is as follows. Quinone reductase that provides resistance to thiol-specific stress caused by electrophilic quinones. In terms of biological role, also exhibits azoreductase activity. Catalyzes the reductive cleavage of the azo bond in aromatic azo compounds to the corresponding amines. This chain is FMN-dependent NADH:quinone oxidoreductase 2, found in Bacillus licheniformis (strain ATCC 14580 / DSM 13 / JCM 2505 / CCUG 7422 / NBRC 12200 / NCIMB 9375 / NCTC 10341 / NRRL NRS-1264 / Gibson 46).